The chain runs to 407 residues: Transmembrane protein 184B (407 aa).

The disordered stretch occupies residues 1–25 (MTVRGDVLAPDPASPTTAAASPSVS). Low complexity predominate over residues 9-25 (APDPASPTTAAASPSVS). 7 helical membrane-spanning segments follow: residues 40–60 (FLMT…ALLI), 84–104 (ILFI…FFTN), 121–141 (LVIY…SSIM), 178–198 (LQFC…QAFG), 214–234 (VTII…LFYF), 249–269 (FFMV…LAIL), and 290–310 (VAAG…ALAL). Residues 369 to 395 (TLEPGPTWRGGAHGLSRSHSLSGARDN) form a disordered region. A phosphoserine mark is found at Ser-388, Ser-402, and Ser-403.

Belongs to the TMEM184 family.

The protein resides in the membrane. Functionally, may activate the MAP kinase signaling pathway. This is Transmembrane protein 184B (TMEM184B) from Homo sapiens (Human).